The following is a 354-amino-acid chain: Uroporphyrinogen decarboxylase (354 aa).

Residues 27–31 (RQAGR), aspartate 77, tyrosine 154, threonine 209, and histidine 327 each bind substrate.

The protein belongs to the uroporphyrinogen decarboxylase family. Homodimer.

It is found in the cytoplasm. It catalyses the reaction uroporphyrinogen III + 4 H(+) = coproporphyrinogen III + 4 CO2. It participates in porphyrin-containing compound metabolism; protoporphyrin-IX biosynthesis; coproporphyrinogen-III from 5-aminolevulinate: step 4/4. Catalyzes the decarboxylation of four acetate groups of uroporphyrinogen-III to yield coproporphyrinogen-III. This is Uroporphyrinogen decarboxylase from Enterobacter sp. (strain 638).